Here is a 117-residue protein sequence, read N- to C-terminus: Elafin (117 aa).

The N-terminal stretch at 1–22 (MRASSFLIVVVFLIAGTLVLEA) is a signal peptide. A propeptide spanning residues 23 to 60 (AVTGVPVKGQDTVKGRVPFNGQDPVKGQVSVKGQDKVK) is cleaved from the precursor. 2 SVP-1 clotting repeats span residues 29–54 (VKGQDTVKGRVPFNGQDPVKGQVSVK) and 55–72 (GQDKVKAQEPVKGPVSTK). The tract at residues 29–72 (VKGQDTVKGRVPFNGQDPVKGQVSVKGQDKVKAQEPVKGPVSTK) is 2 X tandem repeats of SVP-1 like motif. Positions 69–117 (VSTKPGSCPIILIRCAMLNPPNRCLKDTDCPGIKKCCEGSCGMACFVPQ) constitute a WAP domain. 4 cysteine pairs are disulfide-bonded: Cys76/Cys105, Cys83/Cys109, Cys92/Cys104, and Cys98/Cys113.

It localises to the secreted. Neutrophil and pancreatic elastase-specific inhibitor of skin. It may prevent elastase-mediated tissue proteolysis. Has been shown to inhibit the alpha-4-beta-2/CHRNA2-CHRNB2 nicotinic acetylcholine receptor and to produce a weak inhibition on Kv11.1/KCNH2/ERG1 and on the transient receptor potential cation channel subfamily V member 1 (TRPV1). The chain is Elafin (PI3) from Homo sapiens (Human).